The following is a 432-amino-acid chain: Trigger factor (432 aa).

Residues 161–246 (EDRVTIDFTG…LKKVEERELP (86 aa)) enclose the PPIase FKBP-type domain.

It belongs to the FKBP-type PPIase family. Tig subfamily. Homodimer and monomer. In vivo most of the ribosomes are in complex with monomeric TF. Uncomplexed TF, however, is in a monomer-dimer equilibrium with approximately two thirds of TF existing in a dimeric state.

It is found in the cytoplasm. It catalyses the reaction [protein]-peptidylproline (omega=180) = [protein]-peptidylproline (omega=0). Involved in protein export. Acts as a chaperone by maintaining the newly synthesized protein in an open conformation. Functions as a peptidyl-prolyl cis-trans isomerase. This chain is Trigger factor, found in Escherichia coli O6:K15:H31 (strain 536 / UPEC).